A 157-amino-acid polypeptide reads, in one-letter code: Selenoprotein F (157 aa).

A signal peptide spans 1-19 (MSGEVYILWLLSLIQTLSA). Position 84 (U84) is a non-standard amino acid, selenocysteine.

The protein belongs to the selenoprotein M/F family. As to expression, expressed in the brain, liver and retina. Localized to the retinal ganglion cell layer, the inner nuclear layer and the outer nuclear layer at both parr and smolt stages.

It localises to the endoplasmic reticulum lumen. Functionally, may be involved in redox reactions associated with the formation of disulfide bonds. May contribute to the quality control of protein folding in the endoplasmic reticulum. May be involved in retinal development. The sequence is that of Selenoprotein F from Oncorhynchus mykiss (Rainbow trout).